The primary structure comprises 378 residues: Apolipoprotein A-IV (378 aa).

A signal peptide spans 1–20 (MFLKAVVLTLSLVAITGARA). 13 consecutive repeat copies span residues 33 to 54 (DYFS…QSEL), 60 to 81 (SVTK…RNSW), 82 to 98 (EHSR…RQVG), 110 to 130 (PNCD…QAVG), 131 to 152 (PYAE…NQLT), 153 to 174 (SHAQ…SSLT), 175 to 196 (PFAD…GHLT), 197 to 218 (PYTD…RSLA), 219 to 240 (PYAQ…FQMK), 241 to 262 (KNAE…QRLA), 263 to 280 (PVAE…AGLH), 281 to 302 (KSLA…RNVG), and 303 to 324 (PYGE…QKLG). The 13 X 22 AA approximate tandem repeats stretch occupies residues 33-324 (DYFSQLSNNA…QVEELRQKLG (292 aa)). The disordered stretch occupies residues 354–378 (EKESQDTPVALPKQEQEQSAVPLES).

It belongs to the apolipoprotein A1/A4/E family. As to quaternary structure, homodimer.

It localises to the secreted. Its function is as follows. May have a role in chylomicrons and VLDL secretion and catabolism. Required for efficient activation of lipoprotein lipase by ApoC-II; potent activator of LCAT. Apoa-IV is a major component of HDL and chylomicrons. This is Apolipoprotein A-IV from Canis lupus familiaris (Dog).